We begin with the raw amino-acid sequence, 313 residues long: Protein FixB (313 aa).

Position 255-283 (255-283) interacts with FAD; sequence LYLAVGISGQIQHMVGANASQTIFAINKD.

Belongs to the ETF alpha-subunit/FixB family. As to quaternary structure, heterodimer of FixA and FixB.

Its pathway is amine and polyamine metabolism; carnitine metabolism. In terms of biological role, required for anaerobic carnitine reduction. May bring reductant to CaiA. The sequence is that of Protein FixB from Escherichia coli O17:K52:H18 (strain UMN026 / ExPEC).